The primary structure comprises 425 residues: Serine--tRNA ligase (425 aa).

231-233 (TAE) provides a ligand contact to L-serine. 262–264 (RSE) lines the ATP pocket. Glu285 is a binding site for L-serine. 349–352 (EISS) is an ATP binding site. Residue Ser385 coordinates L-serine.

This sequence belongs to the class-II aminoacyl-tRNA synthetase family. Type-1 seryl-tRNA synthetase subfamily. As to quaternary structure, homodimer. The tRNA molecule binds across the dimer.

The protein localises to the cytoplasm. The enzyme catalyses tRNA(Ser) + L-serine + ATP = L-seryl-tRNA(Ser) + AMP + diphosphate + H(+). The catalysed reaction is tRNA(Sec) + L-serine + ATP = L-seryl-tRNA(Sec) + AMP + diphosphate + H(+). It participates in aminoacyl-tRNA biosynthesis; selenocysteinyl-tRNA(Sec) biosynthesis; L-seryl-tRNA(Sec) from L-serine and tRNA(Sec): step 1/1. Functionally, catalyzes the attachment of serine to tRNA(Ser). Is also able to aminoacylate tRNA(Sec) with serine, to form the misacylated tRNA L-seryl-tRNA(Sec), which will be further converted into selenocysteinyl-tRNA(Sec). This chain is Serine--tRNA ligase, found in Bartonella henselae (strain ATCC 49882 / DSM 28221 / CCUG 30454 / Houston 1) (Rochalimaea henselae).